The sequence spans 385 residues: MTKIFRKSDPFIKIVNSALVDLPSPSNISYMWNFGSILGLCLFLQIATGLILTMHFSPSIHMAFSSVVHIVRDVNHGWFIRNFHITGASLFFSCMFIHIGRGIYYGSYKNIKTWYSGVILFICAMVTAFFGYVLPWGQMSFWAATVITNLLSAVPMMGTRMVETVWGGFSVGDPTLKRFLVLHFLVPFLMIAVSLTHLLFLHETGSSNPMGMNPNLDKVPFHPYFSFKDILGFLITLSLIFLGSTLFPYLTTDPDNFTQANSLVTPPHIKPEWYFLFAYAILRAIPNKLMGVFALIMSLSVLLFMPFLIKSNLRSLTFQPFMQFTFWLMISNFILLSWLGAMPLEFPYTIMSQVTSFLYFFIFLFLFPLVSYKENKYLNSRYPPF.

Helical transmembrane passes span 34–54 (FGSILGLCLFLQIATGLILTM), 78–99 (WFIRNFHITGASLFFSCMFIHI), 114–134 (WYSGVILFICAMVTAFFGYVL), and 179–199 (FLVLHFLVPFLMIAVSLTHLL). Residues H84 and H98 each coordinate heme b. Residues H183 and H197 each coordinate heme b. Residue H202 coordinates a ubiquinone. The next 4 membrane-spanning stretches (helical) occupy residues 227–247 (FKDILGFLITLSLIFLGSTLF), 289–309 (LMGVFALIMSLSVLLFMPFLI), 321–341 (FMQFTFWLMISNFILLSWLGA), and 348–368 (YTIMSQVTSFLYFFIFLFLFP).

The protein belongs to the cytochrome b family. As to quaternary structure, the cytochrome bc1 complex contains 3 respiratory subunits (MT-CYB, CYC1 and UQCRFS1), 2 core proteins (UQCRC1 and UQCRC2) and probably 6 low-molecular weight proteins. Heme b serves as cofactor.

It localises to the mitochondrion inner membrane. Functionally, component of the ubiquinol-cytochrome c reductase complex (complex III or cytochrome b-c1 complex) that is part of the mitochondrial respiratory chain. The b-c1 complex mediates electron transfer from ubiquinol to cytochrome c. Contributes to the generation of a proton gradient across the mitochondrial membrane that is then used for ATP synthesis. The protein is Cytochrome b (MT-CYB) of Myxine glutinosa (Atlantic hagfish).